A 432-amino-acid chain; its full sequence is Adenylosuccinate synthetase (432 aa).

GTP contacts are provided by residues 13–19 (GDEGKGK) and 41–43 (GHT). The Proton acceptor role is filled by aspartate 14. The Mg(2+) site is built by aspartate 14 and glycine 41. IMP contacts are provided by residues 14-17 (DEGK), 39-42 (NAGH), threonine 130, arginine 144, glutamine 225, threonine 240, and arginine 304. Histidine 42 serves as the catalytic Proton donor. 300 to 306 (ATTGRRR) serves as a coordination point for substrate. Residues arginine 306, 332–334 (KLD), and 415–417 (STG) contribute to the GTP site.

The protein belongs to the adenylosuccinate synthetase family. Homodimer. Requires Mg(2+) as cofactor.

Its subcellular location is the cytoplasm. It catalyses the reaction IMP + L-aspartate + GTP = N(6)-(1,2-dicarboxyethyl)-AMP + GDP + phosphate + 2 H(+). It functions in the pathway purine metabolism; AMP biosynthesis via de novo pathway; AMP from IMP: step 1/2. Its function is as follows. Plays an important role in the de novo pathway of purine nucleotide biosynthesis. Catalyzes the first committed step in the biosynthesis of AMP from IMP. In Citrobacter koseri (strain ATCC BAA-895 / CDC 4225-83 / SGSC4696), this protein is Adenylosuccinate synthetase.